A 203-amino-acid polypeptide reads, in one-letter code: Ribonuclease HII (203 aa).

An RNase H type-2 domain is found at 14 to 203 (GVIAGVDEVG…ILNSTKRALL (190 aa)). A divalent metal cation is bound by residues Asp-20, Glu-21, and Asp-112.

It belongs to the RNase HII family. Requires Mn(2+) as cofactor. Mg(2+) serves as cofactor.

The protein resides in the cytoplasm. It carries out the reaction Endonucleolytic cleavage to 5'-phosphomonoester.. In terms of biological role, endonuclease that specifically degrades the RNA of RNA-DNA hybrids. The sequence is that of Ribonuclease HII from Wolbachia sp. subsp. Brugia malayi (strain TRS).